Consider the following 173-residue polypeptide: Glutamyl-tRNA(Gln) amidotransferase subunit C-1, mitochondrial (173 aa).

The transit peptide at 1-23 (MIRIPFRLRPPPGRTLHSLVRTF) directs the protein to the mitochondrion. The segment at 51–70 (PSKVPQRPHKSTTTVGQSTP) is disordered. A compositionally biased stretch (polar residues) spans 61–70 (STTTVGQSTP).

Belongs to the GatC family. Subunit of the heterotrimeric GatCAB amidotransferase (AdT) complex, composed of A, B and C subunits.

It localises to the mitochondrion. It catalyses the reaction L-glutamyl-tRNA(Gln) + L-glutamine + ATP + H2O = L-glutaminyl-tRNA(Gln) + L-glutamate + ADP + phosphate + H(+). Functionally, allows the formation of correctly charged Gln-tRNA(Gln) through the transamidation of misacylated Glu-tRNA(Gln) in the mitochondria. The reaction takes place in the presence of glutamine and ATP through an activated gamma-phospho-Glu-tRNA(Gln). This chain is Glutamyl-tRNA(Gln) amidotransferase subunit C-1, mitochondrial, found in Culex quinquefasciatus (Southern house mosquito).